The primary structure comprises 777 residues: Isoamylase (777 aa).

A signal peptide spans 1–32; sequence MDPHAPQRQRSGQRLRALALAALACALSPAHA. Residues aspartate 162, glutamate 263, threonine 264, asparagine 266, and aspartate 293 each coordinate Ca(2+). Aspartate 410 serves as the catalytic Nucleophile. Cysteine 419 and cysteine 423 form a disulfide bridge. Glutamate 458 functions as the Proton donor in the catalytic mechanism.

Belongs to the glycosyl hydrolase 13 family. In terms of assembly, monomer. Ca(2+) is required as a cofactor.

It carries out the reaction Hydrolysis of (1-&gt;6)-alpha-D-glucosidic branch linkages in glycogen, amylopectin and their beta-limit dextrins.. In terms of biological role, has a high rate of hydrolysis for glycogen. Does not cleave pullulan. This chain is Isoamylase (iam), found in Flavobacterium sp.